The sequence spans 250 residues: Isoprenyl transferase (250 aa).

The active site involves Asp27. Asp27 lines the Mg(2+) pocket. Substrate contacts are provided by residues 28–31, Trp32, His48, and 76–78; these read GNRR and STE. The active-site Proton acceptor is the Asn79. Substrate-binding positions include Phe80, Arg82, Arg199, and 205–207; that span reads RVS. Mg(2+) is bound at residue Glu218.

It belongs to the UPP synthase family. In terms of assembly, homodimer. Requires Mg(2+) as cofactor.

In terms of biological role, catalyzes the condensation of isopentenyl diphosphate (IPP) with allylic pyrophosphates generating different type of terpenoids. This chain is Isoprenyl transferase, found in Chlamydia caviae (strain ATCC VR-813 / DSM 19441 / 03DC25 / GPIC) (Chlamydophila caviae).